The chain runs to 114 residues: MEKPLFPLVPLHWFGFGYTALVVSGGIVGYVKTGRAPSLAAGLLFGSLAGVGAYQLYQDPRNVWDFLAATSVTFVGIMGMRSYYYGKFMPVGLIAGASLLMAAKVGVRMLMTSD.

4 consecutive transmembrane segments (helical) span residues 8-28 (LVPLHWFGFGYTALVVSGGIV), 36-56 (APSLAAGLLFGSLAGVGAYQL), 63-80 (VWDFLAATSVTFVGIMGM), and 83-103 (YYYGKFMPVGLIAGASLLMAA).

This sequence belongs to the TMEM14 family.

It is found in the membrane. The polypeptide is Transmembrane protein 14DP (TMEM14DP) (Homo sapiens (Human)).